A 196-amino-acid polypeptide reads, in one-letter code: Adenylate kinase (196 aa).

10–15 (GAGKGT) serves as a coordination point for ATP. The NMP stretch occupies residues 30 to 59 (STGDMLRAAVSAGTEIGKRAKAVMDAGGLV). AMP contacts are provided by residues threonine 31, arginine 36, 57–59 (GLV), 85–88 (GYPR), and glutamine 92. Residues 126 to 142 (NRVAETIAAGGTVRSDD) are LID. Arginine 127 serves as a coordination point for ATP. Positions 139 and 150 each coordinate AMP. Alanine 178 provides a ligand contact to ATP.

The protein belongs to the adenylate kinase family. Monomer.

The protein localises to the cytoplasm. The enzyme catalyses AMP + ATP = 2 ADP. It functions in the pathway purine metabolism; AMP biosynthesis via salvage pathway; AMP from ADP: step 1/1. In terms of biological role, catalyzes the reversible transfer of the terminal phosphate group between ATP and AMP. Plays an important role in cellular energy homeostasis and in adenine nucleotide metabolism. The sequence is that of Adenylate kinase from Agrobacterium fabrum (strain C58 / ATCC 33970) (Agrobacterium tumefaciens (strain C58)).